A 278-amino-acid chain; its full sequence is Protein mtd-1 (278 aa).

An N-terminal signal peptide occupies residues 1–17; that stretch reads MRSSLLLLVFFLSIGWA. Residues 18 to 254 lie on the Extracellular side of the membrane; that stretch reads RYCVHNEKSW…EMLEEIEARK (237 aa). N-linked (GlcNAc...) asparagine glycans are attached at residues N40, N73, N163, and N190. The helical transmembrane segment at 255 to 271 threads the bilayer; it reads VPVDSSAPVNIILSIAF. At 272 to 278 the chain is on the cytoplasmic side; the sequence is SIFLIHF.

Its subcellular location is the cell membrane. Plays a role in mechanosensory transduction (touch sensitivity). In Caenorhabditis elegans, this protein is Protein mtd-1.